Consider the following 52-residue polypeptide: UPF0391 membrane protein Tgr7_2500 (52 aa).

2 helical membrane-spanning segments follow: residues W4–A24 and W29–G49.

The protein belongs to the UPF0391 family.

It is found in the cell membrane. In Thioalkalivibrio sulfidiphilus (strain HL-EbGR7), this protein is UPF0391 membrane protein Tgr7_2500.